We begin with the raw amino-acid sequence, 295 residues long: Pyridoxal 5'-phosphate synthase subunit PdxS (295 aa).

Asp23 provides a ligand contact to D-ribose 5-phosphate. Catalysis depends on Lys80, which acts as the Schiff-base intermediate with D-ribose 5-phosphate. Gly152 is a D-ribose 5-phosphate binding site. Residue Arg164 coordinates D-glyceraldehyde 3-phosphate. Residues Gly213 and Gly234 to Ser235 contribute to the D-ribose 5-phosphate site.

The protein belongs to the PdxS/SNZ family. As to quaternary structure, in the presence of PdxT, forms a dodecamer of heterodimers.

The catalysed reaction is aldehydo-D-ribose 5-phosphate + D-glyceraldehyde 3-phosphate + L-glutamine = pyridoxal 5'-phosphate + L-glutamate + phosphate + 3 H2O + H(+). It functions in the pathway cofactor biosynthesis; pyridoxal 5'-phosphate biosynthesis. Functionally, catalyzes the formation of pyridoxal 5'-phosphate from ribose 5-phosphate (RBP), glyceraldehyde 3-phosphate (G3P) and ammonia. The ammonia is provided by the PdxT subunit. Can also use ribulose 5-phosphate and dihydroxyacetone phosphate as substrates, resulting from enzyme-catalyzed isomerization of RBP and G3P, respectively. The protein is Pyridoxal 5'-phosphate synthase subunit PdxS of Methanopyrus kandleri (strain AV19 / DSM 6324 / JCM 9639 / NBRC 100938).